The chain runs to 177 residues: B-phycoerythrin beta chain (177 aa).

Positions 50 and 61 each coordinate phycourobilin. Residue N72 is modified to N4-methylasparagine. C82 and C158 together coordinate (2R,3E)-phycoerythrobilin.

This sequence belongs to the phycobiliprotein family. As to quaternary structure, heteromer of 6 alpha, 6 beta and one gamma chain. Contains two covalently linked phycoerythrobilin chromophores and one covalently linked phycourobilin chromophore.

It is found in the plastid. Its subcellular location is the chloroplast thylakoid membrane. In terms of biological role, light-harvesting photosynthetic bile pigment-protein from the phycobiliprotein complex. The protein is B-phycoerythrin beta chain (cpeB) of Rhodella violacea (Red alga).